A 598-amino-acid polypeptide reads, in one-letter code: MGVLGSRVAWAWLVQLLLLQQLAGASHVVYDDLELQAAATTADGVPPSIVDSELRTGYHFQPPKNWINDPNAPMYYKGWYHLFYQYNPKGAVWGNIVWAHSVSRDLINWVALKPAIEPSIRADKYGCWSGSATMMADGTPVIMYTGVNRPDVNYQVQNVALPRNGSDPLLREWVKPGHNPVIVPEGGINATQFRDPTTAWRGADGHWRLLVGSLAGQSRGVAYVYRSRDFRRWTRAAQPLHSAPTGMWECPDFYPVTADGRREGVDTSSAVVDAAASARVKYVLKNSLDLRRYDYYTVGTYDRKAERYVPDDPAGDEHHIRYDYGNFYASKTFYDPAKRRRILWGWANESDTAADDVAKGWAGIQAIPRKVWLDPSGKQLLQWPIEEVERLRGKWPVILKDRVVKPGEHVEVTGLQTAQADVEVSFEVGSLEAAERLDPAMAYDAQRLCSARGADARGGVGPFGLWVLASAGLEEKTAVFFRVFRPAARGGGAGKPVVLMCTDPTKSSRNPNMYQPTFAGFVDTDITNGKISLRSLIDRSVVESFGAGGKACILSRVYPSLAIGKNARLYVFNNGKAEIKVSQLTAWEMKKPVMMNGA.

A signal peptide spans 1 to 25; that stretch reads MGVLGSRVAWAWLVQLLLLQQLAGA. The active site involves aspartate 69. Asparagine 164, asparagine 189, and asparagine 348 each carry an N-linked (GlcNAc...) asparagine glycan.

The protein belongs to the glycosyl hydrolase 32 family. In terms of tissue distribution, expressed in leaves and flowers. Weakly expressed in seeds. Expressed in growing roots, node and the rapidly elongating zone of the internode.

Its subcellular location is the secreted. The protein resides in the cell wall. It catalyses the reaction Hydrolysis of terminal non-reducing beta-D-fructofuranoside residues in beta-D-fructofuranosides.. Cell wall-associated invertase that cleaves sucrose into glucose and fructose and is required for assimilated carbon partitioning during early grain-filling. May be involved in sucrose unloaded in the ovular and stylar vascular tissues for the stimulation of starch synthesis in the developing endosperm during grain-filling. Sugar homeostasis mediated by CIN2/GIF1 plays an important role in constitutive and induced physical and chemical defense against pathogens. In Oryza sativa subsp. japonica (Rice), this protein is Beta-fructofuranosidase, insoluble isoenzyme 2 (CIN2).